A 309-amino-acid chain; its full sequence is Porphobilinogen deaminase (309 aa).

Cysteine 241 is subject to S-(dipyrrolylmethanemethyl)cysteine.

This sequence belongs to the HMBS family. As to quaternary structure, monomer. Requires dipyrromethane as cofactor.

It carries out the reaction 4 porphobilinogen + H2O = hydroxymethylbilane + 4 NH4(+). The protein operates within porphyrin-containing compound metabolism; protoporphyrin-IX biosynthesis; coproporphyrinogen-III from 5-aminolevulinate: step 2/4. Tetrapolymerization of the monopyrrole PBG into the hydroxymethylbilane pre-uroporphyrinogen in several discrete steps. The sequence is that of Porphobilinogen deaminase from Bacillus cereus (strain G9842).